The primary structure comprises 342 residues: Heat-inducible transcription repressor HrcA (342 aa).

This sequence belongs to the HrcA family.

In terms of biological role, negative regulator of class I heat shock genes (grpE-dnaK-dnaJ and groELS operons). Prevents heat-shock induction of these operons. This chain is Heat-inducible transcription repressor HrcA, found in Corynebacterium efficiens (strain DSM 44549 / YS-314 / AJ 12310 / JCM 11189 / NBRC 100395).